The primary structure comprises 293 residues: SAGA-associated factor 29 (293 aa).

A coiled-coil region spans residues 12 to 88 (ELLAELQRLL…KALDKIAEIK (77 aa)). Residues 152–293 (GDYVAKPGDK…VVACKETKKK (142 aa)) enclose the SGF29 C-terminal domain. 2 histone H3K4me3 N-terminus binding regions span residues 194–196 (DID) and 240–243 (QTTC). The segment at 264 to 266 (FED) is histone H3K4me3 binding.

The protein belongs to the SGF29 family. In terms of assembly, interacts with dimethylated and trimethylated 'Lys-4' of histone H3 (H3K4me2 and H3K4me3), with a preference for the trimethylated form (H3K4me3). Component of some SAGA-type complexes. Component of the ADA2A-containing complex (ATAC).

It localises to the nucleus. Chromatin reader component of some histone acetyltransferase (HAT) SAGA-type complexes like the TFTC-HAT, ATAC or STAGA complexes. SGF29 specifically recognizes and binds methylated 'Lys-4' of histone H3 (H3K4me), with a preference for trimethylated form (H3K4me3). In the SAGA-type complexes, SGF29 is required to recruit complexes to H3K4me. Also binds non-histone proteins that are methylated on Lys residues. The sequence is that of SAGA-associated factor 29 from Gallus gallus (Chicken).